A 406-amino-acid chain; its full sequence is Argininosuccinate synthase (406 aa).

ATP contacts are provided by residues 14–22 (AYSGGLDTS) and alanine 41. L-citrulline contacts are provided by tyrosine 92 and serine 97. Glycine 122 contacts ATP. Positions 124, 128, and 129 each coordinate L-aspartate. L-citrulline is bound at residue asparagine 128. L-citrulline-binding residues include arginine 132, serine 181, serine 190, glutamate 266, and tyrosine 278.

It belongs to the argininosuccinate synthase family. Type 1 subfamily. In terms of assembly, homotetramer.

The protein localises to the cytoplasm. It catalyses the reaction L-citrulline + L-aspartate + ATP = 2-(N(omega)-L-arginino)succinate + AMP + diphosphate + H(+). Its pathway is amino-acid biosynthesis; L-arginine biosynthesis; L-arginine from L-ornithine and carbamoyl phosphate: step 2/3. This is Argininosuccinate synthase from Geobacter metallireducens (strain ATCC 53774 / DSM 7210 / GS-15).